The following is a 137-amino-acid chain: Small ribosomal subunit protein uS11 (137 aa).

Residues 1-25 (MADRRRGAARGGAARPRRRERKNIP) form a disordered region. Positions 15-25 (RPRRRERKNIP) are enriched in basic residues.

The protein belongs to the universal ribosomal protein uS11 family. Part of the 30S ribosomal subunit. Interacts with proteins S7 and S18. Binds to IF-3.

Its function is as follows. Located on the platform of the 30S subunit, it bridges several disparate RNA helices of the 16S rRNA. Forms part of the Shine-Dalgarno cleft in the 70S ribosome. The protein is Small ribosomal subunit protein uS11 of Thermomicrobium roseum (strain ATCC 27502 / DSM 5159 / P-2).